A 602-amino-acid chain; its full sequence is Elongation factor 4 (602 aa).

Residues 7-188 (ENIRNFSIIA…SIIRLVPPPK (182 aa)) enclose the tr-type G domain. Residues 19 to 24 (DHGKST) and 135 to 138 (NKID) contribute to the GTP site.

The protein belongs to the TRAFAC class translation factor GTPase superfamily. Classic translation factor GTPase family. LepA subfamily.

It is found in the cell inner membrane. It catalyses the reaction GTP + H2O = GDP + phosphate + H(+). Its function is as follows. Required for accurate and efficient protein synthesis under certain stress conditions. May act as a fidelity factor of the translation reaction, by catalyzing a one-codon backward translocation of tRNAs on improperly translocated ribosomes. Back-translocation proceeds from a post-translocation (POST) complex to a pre-translocation (PRE) complex, thus giving elongation factor G a second chance to translocate the tRNAs correctly. Binds to ribosomes in a GTP-dependent manner. The protein is Elongation factor 4 of Chlamydia trachomatis serovar D (strain ATCC VR-885 / DSM 19411 / UW-3/Cx).